The primary structure comprises 119 residues: Large ribosomal subunit protein uL22 (119 aa).

Belongs to the universal ribosomal protein uL22 family. As to quaternary structure, part of the 50S ribosomal subunit.

Its function is as follows. This protein binds specifically to 23S rRNA; its binding is stimulated by other ribosomal proteins, e.g. L4, L17, and L20. It is important during the early stages of 50S assembly. It makes multiple contacts with different domains of the 23S rRNA in the assembled 50S subunit and ribosome. The globular domain of the protein is located near the polypeptide exit tunnel on the outside of the subunit, while an extended beta-hairpin is found that lines the wall of the exit tunnel in the center of the 70S ribosome. This is Large ribosomal subunit protein uL22 from Bifidobacterium animalis subsp. lactis (strain AD011).